Reading from the N-terminus, the 349-residue chain is Isopentenyl-diphosphate delta-isomerase (349 aa).

Residue 12–13 (RK) coordinates substrate. FMN is bound by residues 69 to 71 (GMT), serine 99, and asparagine 128. Glutamine 158 is a binding site for substrate. Glutamate 159 provides a ligand contact to Mg(2+). Residues lysine 189, serine 214, threonine 219, 265–267 (GIR), and 286–287 (SG) contribute to the FMN site.

This sequence belongs to the IPP isomerase type 2 family. Homooctamer. Dimer of tetramers. FMN is required as a cofactor. The cofactor is NADPH. It depends on Mg(2+) as a cofactor.

The protein localises to the cytoplasm. It carries out the reaction isopentenyl diphosphate = dimethylallyl diphosphate. Functionally, involved in the biosynthesis of isoprenoids. Catalyzes the 1,3-allylic rearrangement of the homoallylic substrate isopentenyl (IPP) to its allylic isomer, dimethylallyl diphosphate (DMAPP). This Latilactobacillus sakei subsp. sakei (strain 23K) (Lactobacillus sakei subsp. sakei) protein is Isopentenyl-diphosphate delta-isomerase.